The following is a 251-amino-acid chain: Sugar fermentation stimulation protein homolog (251 aa).

Belongs to the SfsA family.

The polypeptide is Sugar fermentation stimulation protein homolog (Yersinia pseudotuberculosis serotype O:1b (strain IP 31758)).